A 121-amino-acid chain; its full sequence is Small ribosomal subunit protein uS10 (121 aa).

Residue Ser2 is modified to N-acetylserine. Residues Lys6, Lys8, Lys21, Lys32, and Lys101 each participate in a glycyl lysine isopeptide (Lys-Gly) (interchain with G-Cter in ubiquitin) cross-link.

The protein belongs to the universal ribosomal protein uS10 family. Component of the small ribosomal subunit (SSU). Mature yeast ribosomes consist of a small (40S) and a large (60S) subunit. The 40S small subunit contains 1 molecule of ribosomal RNA (18S rRNA) and 33 different proteins (encoded by 57 genes). The large 60S subunit contains 3 rRNA molecules (25S, 5.8S and 5S rRNA) and 46 different proteins (encoded by 81 genes). Ubiquitinated at Lys-6 and Lys-8 by HEL2, to activate the ribosome quality control (RQC) pathway in response to stalled ribosomes. Post-translationally, N-terminally acetylated by acetyltransferase NatA. Also partially acetylated by NatC.

The protein resides in the cytoplasm. Component of the ribosome, a large ribonucleoprotein complex responsible for the synthesis of proteins in the cell. The small ribosomal subunit (SSU) binds messenger RNAs (mRNAs) and translates the encoded message by selecting cognate aminoacyl-transfer RNA (tRNA) molecules. The large subunit (LSU) contains the ribosomal catalytic site termed the peptidyl transferase center (PTC), which catalyzes the formation of peptide bonds, thereby polymerizing the amino acids delivered by tRNAs into a polypeptide chain. The nascent polypeptides leave the ribosome through a tunnel in the LSU and interact with protein factors that function in enzymatic processing, targeting, and the membrane insertion of nascent chains at the exit of the ribosomal tunnel. The chain is Small ribosomal subunit protein uS10 from Saccharomyces cerevisiae (strain ATCC 204508 / S288c) (Baker's yeast).